Consider the following 492-residue polypeptide: Phosphatidylinositol 4-kinase type 2-beta (492 aa).

Positions 1–11 (MEPKQTADARD) are enriched in basic and acidic residues. Residues 1–98 (MEPKQTADAR…SDRENMSGGH (98 aa)) are disordered. The region spanning 127 to 462 (GVFPERISQG…VQMPRVVVER (336 aa)) is the PI3K/PI4K catalytic domain. The segment at 133 to 139 (ISQGSSG) is G-loop. S140 and K155 together coordinate ATP. The interval 160 to 162 (EPY) is important for substrate binding. The segment at 168-181 (KWTKYFHKICCPCC) is important for interaction with membranes. Residues 264–267 (QLFV) and 278–279 (RK) each bind ATP. The important for interaction with membranes stretch occupies residues 271 to 279 (KEADYWLRK). Residues 308 to 316 (RNTDRGNDN) form a catalytic loop region. The activation loop stretch occupies residues 353 to 373 (AIDNGLAFPFKHPDEWRAYPF). D355 is an ATP binding site. The segment at 368–377 (WRAYPFHWAW) is important for interaction with membranes.

Belongs to the PI3/PI4-kinase family. Type II PI4K subfamily.

Its subcellular location is the cytoplasm. It is found in the cytosol. The protein resides in the golgi apparatus membrane. It localises to the endoplasmic reticulum membrane. The protein localises to the cell membrane. Its subcellular location is the early endosome membrane. It catalyses the reaction a 1,2-diacyl-sn-glycero-3-phospho-(1D-myo-inositol) + ATP = a 1,2-diacyl-sn-glycero-3-phospho-(1D-myo-inositol 4-phosphate) + ADP + H(+). In terms of biological role, contributes to the overall PI4-kinase activity of the cell. This contribution may be especially significant in plasma membrane, endosomal and Golgi compartments. The phosphorylation of phosphatidylinositol (PI) to PI4P is the first committed step in the generation of phosphatidylinositol 4,5-bisphosphate (PIP2), a precursor of the second messenger inositol 1,4,5-trisphosphate (InsP3). This chain is Phosphatidylinositol 4-kinase type 2-beta (pi4k2b), found in Xenopus tropicalis (Western clawed frog).